A 142-amino-acid chain; its full sequence is Large ribosomal subunit protein uL11 (142 aa).

It belongs to the universal ribosomal protein uL11 family. Part of the ribosomal stalk of the 50S ribosomal subunit. Interacts with L10 and the large rRNA to form the base of the stalk. L10 forms an elongated spine to which L12 dimers bind in a sequential fashion forming a multimeric L10(L12)X complex. One or more lysine residues are methylated.

Forms part of the ribosomal stalk which helps the ribosome interact with GTP-bound translation factors. This is Large ribosomal subunit protein uL11 from Lachnoclostridium phytofermentans (strain ATCC 700394 / DSM 18823 / ISDg) (Clostridium phytofermentans).